Reading from the N-terminus, the 434-residue chain is ATP-dependent protease ATPase subunit HslU (434 aa).

ATP is bound by residues V18, 60-65 (GVGKTE), D247, E312, and R384.

It belongs to the ClpX chaperone family. HslU subfamily. As to quaternary structure, a double ring-shaped homohexamer of HslV is capped on each side by a ring-shaped HslU homohexamer. The assembly of the HslU/HslV complex is dependent on binding of ATP.

It localises to the cytoplasm. ATPase subunit of a proteasome-like degradation complex; this subunit has chaperone activity. The binding of ATP and its subsequent hydrolysis by HslU are essential for unfolding of protein substrates subsequently hydrolyzed by HslV. HslU recognizes the N-terminal part of its protein substrates and unfolds these before they are guided to HslV for hydrolysis. The polypeptide is ATP-dependent protease ATPase subunit HslU (Phenylobacterium zucineum (strain HLK1)).